A 304-amino-acid chain; its full sequence is Cell surface-binding protein OPG105 (304 aa).

Belongs to the alpha-carbonic anhydrase family. Homodimer; disulfide-linked. Apparently non-glycosylated.

The protein resides in the virion membrane. Binds to chondroitin sulfate on the cell surface to provide virion attachment to target cell. The protein is Cell surface-binding protein OPG105 (OPG105) of Monkeypox virus.